The following is a 307-amino-acid chain: UDP-3-O-acyl-N-acetylglucosamine deacetylase (307 aa).

3 residues coordinate Zn(2+): His78, His241, and Asp245. The Proton donor role is filled by His268.

The protein belongs to the LpxC family. Zn(2+) serves as cofactor.

The enzyme catalyses a UDP-3-O-[(3R)-3-hydroxyacyl]-N-acetyl-alpha-D-glucosamine + H2O = a UDP-3-O-[(3R)-3-hydroxyacyl]-alpha-D-glucosamine + acetate. Its pathway is glycolipid biosynthesis; lipid IV(A) biosynthesis; lipid IV(A) from (3R)-3-hydroxytetradecanoyl-[acyl-carrier-protein] and UDP-N-acetyl-alpha-D-glucosamine: step 2/6. Its function is as follows. Catalyzes the hydrolysis of UDP-3-O-myristoyl-N-acetylglucosamine to form UDP-3-O-myristoylglucosamine and acetate, the committed step in lipid A biosynthesis. The polypeptide is UDP-3-O-acyl-N-acetylglucosamine deacetylase (Bordetella avium (strain 197N)).